The following is a 75-amino-acid chain: UPF0352 protein YejL (75 aa).

This sequence belongs to the UPF0352 family.

The protein is UPF0352 protein YejL of Escherichia coli O139:H28 (strain E24377A / ETEC).